Consider the following 211-residue polypeptide: BAG family molecular chaperone regulator 2 (211 aa).

N-acetylalanine is present on alanine 2. Residues serine 20, serine 31, and serine 73 each carry the phosphoserine modification. The stretch at serine 20–histidine 61 forms a coiled coil. The BAG domain occupies serine 109–lysine 189.

Binds to the ATPase domain of HSP/HSC70 chaperones. May interact with NWD1. Interacts with HSPA1A (via NBD), HSPA1B (via NBD) and HSPA8. May interact with DNJC9; the interaction seems to be histone-dependent.

Functionally, co-chaperone for HSP70 and HSC70 chaperone proteins. Acts as a nucleotide-exchange factor (NEF) promoting the release of ADP from the HSP70 and HSC70 proteins thereby triggering client/substrate protein release. This is BAG family molecular chaperone regulator 2 (BAG2) from Homo sapiens (Human).